We begin with the raw amino-acid sequence, 616 residues long: RNA-directed RNA polymerase (616 aa).

It carries out the reaction RNA(n) + a ribonucleoside 5'-triphosphate = RNA(n+1) + diphosphate. RNA-dependent RNA polymerase which replicates the viral genome. This chain is RNA-directed RNA polymerase, found in White clover cryptic virus 1 (isolate Boccardo/2004) (WCCV-1).